The primary structure comprises 366 residues: Subtilisin-like protease het-Q2 (366 aa).

Residues 1 to 321 form the Peptidase S8 domain; the sequence is MSAISHHSLS…RVLMALGEKT (321 aa). Catalysis depends on aspartate 35, which acts as the Charge relay system. A disordered region spans residues 79-98; that stretch reads DFCQPSPPGDRQGPPPQPHS. The span at 83–96 shows a compositional bias: pro residues; sequence PSPPGDRQGPPPQP. Active-site charge relay system residues include histidine 105 and serine 266. The helical transmembrane segment at 261–283 threads the bilayer; the sequence is LVSGSSFATPVVVSVAALVLAFV.

Belongs to the peptidase S8 family.

It localises to the membrane. Its function is as follows. Serine protease involved in heterokaryon incompatibility, a process that ensures that during spontaneous vegetative cell fusion, only compatible cells from the same colony survive (non-self-recognition). In P.anserina, the het-q locus exists as 2 incompatible alleles, het-Q1 (AC B2AXJ5) and het-Q2 (this entry). Prevents cell fusion with strains containing the gasdermin-like protein het-Q1 by mediating proteolytic cleavage and maturation of het-Q1 during the allorecognition process, thereby triggering cell death. The polypeptide is Subtilisin-like protease het-Q2 (Podospora anserina (Pleurage anserina)).